The following is a 283-amino-acid chain: MASKLCRSRALASALRSAKPSPAIRCLATTSRNLINMPEGPNPRQFPREPLPGALNAAVVNPADKYQSKADNLHKYGSWLMGCLPKYIQQFSVWKDELTIYISPAGVIPVFSFLKYNTAAEYTQVSDITAVDFPTKDQRFEVVYNLLSVRHNSRIRVKTYADEVSPVPSITPLYDGANWYEREVYDLFGVFFTGHPDLRRIMTDYGFDGHPLRKDFPMTGYTEIRYDEEKKRIVTEPLEMTQAFRNFEGGSSAWEQVGAGIDRKPESFKLPTPKPETKPEEKK.

The N-terminal 17 residues, 1–17 (MASKLCRSRALASALRS), are a transit peptide targeting the mitochondrion. The segment at 258–283 (GAGIDRKPESFKLPTPKPETKPEEKK) is disordered.

It belongs to the complex I 30 kDa subunit family. In terms of assembly, complex I is composed of about 40 different subunits. This is a component of the iron-sulfur protein fraction.

It is found in the mitochondrion inner membrane. It catalyses the reaction a ubiquinone + NADH + 5 H(+)(in) = a ubiquinol + NAD(+) + 4 H(+)(out). In terms of biological role, core subunit of the mitochondrial membrane respiratory chain NADH dehydrogenase (Complex I) that is believed to belong to the minimal assembly required for catalysis. Complex I functions in the transfer of electrons from NADH to the respiratory chain. The immediate electron acceptor for the enzyme is believed to be ubiquinone. The protein is NADH-ubiquinone oxidoreductase 30.4 kDa subunit, mitochondrial (nuo-31) of Neurospora crassa (strain ATCC 24698 / 74-OR23-1A / CBS 708.71 / DSM 1257 / FGSC 987).